The sequence spans 386 residues: Succinate--CoA ligase [ADP-forming] subunit beta (386 aa).

Positions 9–244 (KQILKRFGIS…YDEEIPEEIE (236 aa)) constitute an ATP-grasp domain. ATP contacts are provided by residues K46, 53-55 (GRG), E99, C102, and E107. N199 and D213 together coordinate Mg(2+). Residues N264 and 320–322 (GIM) each bind substrate.

The protein belongs to the succinate/malate CoA ligase beta subunit family. As to quaternary structure, heterotetramer of two alpha and two beta subunits. Requires Mg(2+) as cofactor.

It catalyses the reaction succinate + ATP + CoA = succinyl-CoA + ADP + phosphate. The enzyme catalyses GTP + succinate + CoA = succinyl-CoA + GDP + phosphate. The protein operates within carbohydrate metabolism; tricarboxylic acid cycle; succinate from succinyl-CoA (ligase route): step 1/1. Its function is as follows. Succinyl-CoA synthetase functions in the citric acid cycle (TCA), coupling the hydrolysis of succinyl-CoA to the synthesis of either ATP or GTP and thus represents the only step of substrate-level phosphorylation in the TCA. The beta subunit provides nucleotide specificity of the enzyme and binds the substrate succinate, while the binding sites for coenzyme A and phosphate are found in the alpha subunit. The protein is Succinate--CoA ligase [ADP-forming] subunit beta of Ehrlichia ruminantium (strain Welgevonden).